The chain runs to 1241 residues: ATP-dependent helicase/nuclease subunit A (1241 aa).

Residues 12 to 485 (SQWTDDQWKA…IDLAKNFRSR (474 aa)) form the UvrD-like helicase ATP-binding domain. Residue 33 to 40 (AAAGSGKT) participates in ATP binding. The UvrD-like helicase C-terminal domain occupies 505-805 (GEIDYDADAE…RIMTIHKSKG (301 aa)).

This sequence belongs to the helicase family. AddA subfamily. In terms of assembly, heterodimer of AddA and AddB/RexB. It depends on Mg(2+) as a cofactor.

The enzyme catalyses Couples ATP hydrolysis with the unwinding of duplex DNA by translocating in the 3'-5' direction.. It catalyses the reaction ATP + H2O = ADP + phosphate + H(+). Functionally, the heterodimer acts as both an ATP-dependent DNA helicase and an ATP-dependent, dual-direction single-stranded exonuclease. Recognizes the chi site generating a DNA molecule suitable for the initiation of homologous recombination. The AddA nuclease domain is required for chi fragment generation; this subunit has the helicase and 3' -&gt; 5' nuclease activities. The polypeptide is ATP-dependent helicase/nuclease subunit A (Bacillus mycoides (strain KBAB4) (Bacillus weihenstephanensis)).